Here is a 398-residue protein sequence, read N- to C-terminus: MRESVHTNTSIWSKGMMSVIAAQFLSAFGDNALLFATLALLKAQFYPDWSQPILQMVFVGAYILFAPFVGQVADSFAKGRVMMFANGLKLLGAASICFGFNPFVGYTLVGIGAAAYSPAKYGILGELTTGDKLVKANGLMEASTIAAILLGSVAGGVLADWHVIAALVACALAYAGAVVANLFIPKLAAARPGQSWHLRKMVRSFFCACISLWRNGETRFSLVGTSLFWGAGVTLRFLLVLWVPVALGITDNATPTYLNAMVAIGIVVGAGAAAKLVTLETVARCMPAGILIGVVVLIFSLQHALLPAYALLTLIGVLGGFFVVPLNALLQERGKKSVGAGNAIAVQNLGENSAMLLMLGLYSLAVLVGIPVVAIGIGFGGLFALAIAALWIWQRRQM.

11 helical membrane-spanning segments follow: residues 19–39, 53–73, 91–111, 139–159, 164–184, 227–247, 257–277, 281–301, 304–324, 350–370, and 372–392; these read VIAA…ATLA, ILQM…GQVA, LGAA…LVGI, LMEA…GVLA, IAAL…NLFI, LFWG…PVAL, YLNA…AKLV, TVAR…IFSL, ALLP…FFVV, GENS…LVGI, and VVAI…ALWI.

It belongs to the major facilitator superfamily. LplT (TC 2.A.1.42) family.

Its subcellular location is the cell inner membrane. Functionally, catalyzes the facilitated diffusion of 2-acyl-glycero-3-phosphoethanolamine (2-acyl-GPE) into the cell. This chain is Lysophospholipid transporter LplT, found in Citrobacter koseri (strain ATCC BAA-895 / CDC 4225-83 / SGSC4696).